The following is a 154-amino-acid chain: Ribosome maturation factor RimP (154 aa).

Belongs to the RimP family.

The protein resides in the cytoplasm. Required for maturation of 30S ribosomal subunits. In Ruthia magnifica subsp. Calyptogena magnifica, this protein is Ribosome maturation factor RimP.